A 291-amino-acid chain; its full sequence is Flavin-dependent thymidylate synthase (291 aa).

The 211-residue stretch at 31–241 (GFVRVVDYMG…PMVHAAFVEY (211 aa)) folds into the ThyX domain. Residues Ser77, 100–102 (RHR), and Glu108 each bind FAD. Residues 97 to 100 (QWVR), 108 to 112 (EYSAR), and Arg180 contribute to the dUMP site. The ThyX motif signature appears at 100-110 (RHRTASINEYS). 196 to 198 (NLH) contacts FAD. Residue Arg207 coordinates dUMP. Catalysis depends on Arg207, which acts as the Involved in ionization of N3 of dUMP, leading to its activation.

The protein belongs to the thymidylate synthase ThyX family. Homotetramer. It depends on FAD as a cofactor.

The catalysed reaction is dUMP + (6R)-5,10-methylene-5,6,7,8-tetrahydrofolate + NADPH + H(+) = dTMP + (6S)-5,6,7,8-tetrahydrofolate + NADP(+). It participates in pyrimidine metabolism; dTTP biosynthesis. Catalyzes the reductive methylation of 2'-deoxyuridine-5'-monophosphate (dUMP) to 2'-deoxythymidine-5'-monophosphate (dTMP) while utilizing 5,10-methylenetetrahydrofolate (mTHF) as the methyl donor, and NADPH and FADH(2) as the reductant. This Anaplasma marginale (strain St. Maries) protein is Flavin-dependent thymidylate synthase.